The chain runs to 238 residues: Alpha-tubulin N-acetyltransferase (238 aa).

The 196-residue stretch at 1–196 (MEFDFDISQS…NNFVVFEDLF (196 aa)) folds into the N-acetyltransferase domain. Residues 129-142 (FYVHESQQRTGNGK) and 165-174 (SFKFLSFLQK) each bind acetyl-CoA.

Belongs to the acetyltransferase ATAT1 family.

The catalysed reaction is L-lysyl-[alpha-tubulin] + acetyl-CoA = N(6)-acetyl-L-lysyl-[alpha-tubulin] + CoA + H(+). In terms of biological role, specifically acetylates 'Lys-40' in alpha-tubulin on the lumenal side of microtubules. Promotes microtubule destabilization and accelerates microtubule dynamics; this activity may be independent of acetylation activity. Acetylates alpha-tubulin with a slow enzymatic rate, due to a catalytic site that is not optimized for acetyl transfer. Enters the microtubule through each end and diffuses quickly throughout the lumen of microtubules. Acetylates only long/old microtubules because of its slow acetylation rate since it does not have time to act on dynamically unstable microtubules before the enzyme is released. The sequence is that of Alpha-tubulin N-acetyltransferase from Trichoplax adhaerens (Trichoplax reptans).